Reading from the N-terminus, the 277-residue chain is Proteasome subunit beta type-7 (277 aa).

Residues 1–43 constitute a propeptide, removed in mature form; sequence MAAVSVYERPVGGFSFDNCRRNAVLEADFAKKGYKLPTARKTG. The Nucleophile role is filled by Thr-44.

This sequence belongs to the peptidase T1B family. In terms of assembly, the 26S proteasome consists of a 20S proteasome core and two 19S regulatory subunits. The 20S proteasome core is a barrel-shaped complex made of 28 subunits that are arranged in four stacked rings. The two outer rings are each formed by seven alpha subunits, and the two inner rings are formed by seven beta subunits. The proteolytic activity is exerted by three beta-subunits PSMB5, PSMB6 and PSMB7.

The protein resides in the cytoplasm. It localises to the nucleus. The enzyme catalyses Cleavage of peptide bonds with very broad specificity.. Functionally, component of the 20S core proteasome complex involved in the proteolytic degradation of most intracellular proteins. This complex plays numerous essential roles within the cell by associating with different regulatory particles. Associated with two 19S regulatory particles, forms the 26S proteasome and thus participates in the ATP-dependent degradation of ubiquitinated proteins. The 26S proteasome plays a key role in the maintenance of protein homeostasis by removing misfolded or damaged proteins that could impair cellular functions, and by removing proteins whose functions are no longer required. Associated with the PA200 or PA28, the 20S proteasome mediates ubiquitin-independent protein degradation. This type of proteolysis is required in several pathways including spermatogenesis (20S-PA200 complex) or generation of a subset of MHC class I-presented antigenic peptides (20S-PA28 complex). Within the 20S core complex, PSMB7 displays a trypsin-like activity. This chain is Proteasome subunit beta type-7 (PSMB7), found in Bos taurus (Bovine).